The following is a 128-amino-acid chain: Modulator protein MzrA (128 aa).

The Cytoplasmic segment spans residues 1-13 (MLALLRPYLSTRV). The helical transmembrane segment at 14–34 (LCVLVVCFSALMLVAFIPTLF) threads the bilayer. The Periplasmic segment spans residues 35–128 (RNDTALQIRA…RLSLRKQSVG (94 aa)).

This sequence belongs to the MzrA family. As to quaternary structure, interacts with EnvZ.

It localises to the cell inner membrane. Functionally, modulates the activity of the EnvZ/OmpR two-component regulatory system, probably by directly modulating EnvZ enzymatic activity and increasing stability of phosphorylated OmpR. The sequence is that of Modulator protein MzrA from Erwinia billingiae (strain Eb661).